The primary structure comprises 164 residues: MKIAVIQGPNLNMLGIREQHIYGNMSLEQIHQQLQTAAEQNGVELEFFQSNFEGEIVDRVQECLGTVDGIMINPAAYSHTSIAIKDALSAVNMPVVEVHISNIYKREEFRQKSITAAASTGVISGFGAFGYHMGLIALMQMINELKAIAQARNAQIQAQTEENK.

Tyrosine 22 serves as the catalytic Proton acceptor. Asparagine 73, histidine 79, and aspartate 86 together coordinate substrate. Histidine 99 functions as the Proton donor in the catalytic mechanism. Residues 100-101 and arginine 110 contribute to the substrate site; that span reads IS.

It belongs to the type-II 3-dehydroquinase family. As to quaternary structure, homododecamer.

The catalysed reaction is 3-dehydroquinate = 3-dehydroshikimate + H2O. It functions in the pathway metabolic intermediate biosynthesis; chorismate biosynthesis; chorismate from D-erythrose 4-phosphate and phosphoenolpyruvate: step 3/7. In terms of biological role, catalyzes a trans-dehydration via an enolate intermediate. The polypeptide is 3-dehydroquinate dehydratase (Aliarcobacter butzleri (strain RM4018) (Arcobacter butzleri)).